Consider the following 274-residue polypeptide: THAP domain-containing protein 8 (274 aa).

The THAP-type zinc finger occupies 1-85 (MPKYCRAPNC…LRPDAVPSIF (85 aa)). The interval 83–121 (SIFSRGPPAKSQRRTRSTQKPVSPPPPLQKNTPLPQSPA) is disordered.

This chain is THAP domain-containing protein 8 (THAP8), found in Homo sapiens (Human).